Consider the following 505-residue polypeptide: Glucose-6-phosphate 1-dehydrogenase (505 aa).

Position 2 is an N-acetylserine (serine 2). NADP(+) contacts are provided by residues 18 to 25 (GASGDLAK) and arginine 52. Serine 142 is modified (phosphoserine). Tyrosine 145 carries the phosphotyrosine modification. Residue lysine 157 coordinates NADP(+). D-glucose 6-phosphate contacts are provided by residues lysine 157, 187–191 (HYLGK), glutamate 225, and aspartate 244. The active-site Proton acceptor is the histidine 249. Arginine 340 lines the NADP(+) pocket. Lysine 343 lines the D-glucose 6-phosphate pocket. Residues lysine 349, arginine 353, and arginine 375 each coordinate NADP(+). D-glucose 6-phosphate is bound at residue glutamine 377. Residues 383–385 (YLK) and arginine 470 contribute to the NADP(+) site.

It belongs to the glucose-6-phosphate dehydrogenase family.

The catalysed reaction is D-glucose 6-phosphate + NADP(+) = 6-phospho-D-glucono-1,5-lactone + NADPH + H(+). Its pathway is carbohydrate degradation; pentose phosphate pathway; D-ribulose 5-phosphate from D-glucose 6-phosphate (oxidative stage): step 1/3. Its function is as follows. Catalyzes the rate-limiting step of the oxidative pentose-phosphate pathway, which represents a route for the dissimilation of carbohydrates besides glycolysis. The main function of this enzyme is to provide reducing power (NADPH) and pentose phosphates for fatty acid and nucleic acid synthesis. This is Glucose-6-phosphate 1-dehydrogenase (ZWF1) from Saccharomyces cerevisiae (strain ATCC 204508 / S288c) (Baker's yeast).